The chain runs to 199 residues: Imidazole glycerol phosphate synthase subunit HisH (199 aa).

In terms of domain architecture, Glutamine amidotransferase type-1 spans 3–199 (NITIIDTGCA…LKNFVEKVPF (197 aa)). Cysteine 78 functions as the Nucleophile in the catalytic mechanism. Catalysis depends on residues histidine 178 and glutamate 180.

In terms of assembly, heterodimer of HisH and HisF.

Its subcellular location is the cytoplasm. The enzyme catalyses 5-[(5-phospho-1-deoxy-D-ribulos-1-ylimino)methylamino]-1-(5-phospho-beta-D-ribosyl)imidazole-4-carboxamide + L-glutamine = D-erythro-1-(imidazol-4-yl)glycerol 3-phosphate + 5-amino-1-(5-phospho-beta-D-ribosyl)imidazole-4-carboxamide + L-glutamate + H(+). It catalyses the reaction L-glutamine + H2O = L-glutamate + NH4(+). It functions in the pathway amino-acid biosynthesis; L-histidine biosynthesis; L-histidine from 5-phospho-alpha-D-ribose 1-diphosphate: step 5/9. Its function is as follows. IGPS catalyzes the conversion of PRFAR and glutamine to IGP, AICAR and glutamate. The HisH subunit catalyzes the hydrolysis of glutamine to glutamate and ammonia as part of the synthesis of IGP and AICAR. The resulting ammonia molecule is channeled to the active site of HisF. This Haemophilus influenzae (strain 86-028NP) protein is Imidazole glycerol phosphate synthase subunit HisH.